A 348-amino-acid chain; its full sequence is UPF0283 membrane protein HAPS_0079 (348 aa).

3 consecutive transmembrane segments (helical) span residues 57–77 (FLAALALFGIATIAQSVQWLI), 86–106 (IYFAFAVAFFGISLAGVGAII), and 203–223 (ENAIIVAVSPLALVDILMVAW).

The protein belongs to the UPF0283 family.

The protein resides in the cell inner membrane. In Glaesserella parasuis serovar 5 (strain SH0165) (Haemophilus parasuis), this protein is UPF0283 membrane protein HAPS_0079.